The following is a 336-amino-acid chain: Probable tRNA pseudouridine synthase B (336 aa).

Catalysis depends on Asp81, which acts as the Nucleophile. Residues 248–323 form the PUA domain; it reads LKKVVVKDSA…VAVDVERVYM (76 aa).

The protein belongs to the pseudouridine synthase TruB family. Type 2 subfamily.

It catalyses the reaction uridine(55) in tRNA = pseudouridine(55) in tRNA. Its function is as follows. Could be responsible for synthesis of pseudouridine from uracil-55 in the psi GC loop of transfer RNAs. In Methanocaldococcus jannaschii (strain ATCC 43067 / DSM 2661 / JAL-1 / JCM 10045 / NBRC 100440) (Methanococcus jannaschii), this protein is Probable tRNA pseudouridine synthase B.